The sequence spans 149 residues: UPF0178 protein SE_0451 (149 aa).

It belongs to the UPF0178 family.

In Staphylococcus epidermidis (strain ATCC 12228 / FDA PCI 1200), this protein is UPF0178 protein SE_0451.